Reading from the N-terminus, the 815-residue chain is Probable receptor-like protein kinase At2g39360 (815 aa).

A signal peptide spans 1–26 (MINLKLFLELKLCFLITLLCSSHISS). At 27–407 (VSDTFFINCG…SSSNKSSNTS (381 aa)) the chain is on the extracellular side. Residues Asn-40, Asn-45, Asn-125, Asn-146, Asn-209, Asn-244, Asn-277, Asn-331, Asn-355, Asn-401, and Asn-405 are each glycosylated (N-linked (GlcNAc...) asparagine). Residues 408–428 (VGLIAGLSAALCVALVFGVVV) traverse the membrane as a helical segment. Topologically, residues 429-815 (SWWCIRKRRR…FAQMVREETR (387 aa)) are cytoplasmic. One can recognise a Protein kinase domain in the interval 487–761 (FDESLVIGVG…GDLLWNLEFM (275 aa)). Residues 493-501 (IGVGGFGKV) and Lys-515 each bind ATP. Catalysis depends on Asp-612, which acts as the Proton acceptor.

This sequence belongs to the protein kinase superfamily. Ser/Thr protein kinase family.

It localises to the cell membrane. This is Probable receptor-like protein kinase At2g39360 from Arabidopsis thaliana (Mouse-ear cress).